The chain runs to 228 residues: Vesicle transport protein SEC20 (228 aa).

The Cytoplasmic segment spans residues 1–199; it reads MAAPQDVHVR…LITKYNRREL (199 aa). The stretch at 37–90 forms a coiled coil; sequence LSALTELNTKVKEKFQQLRHRIQDLEQLAKEQDKESEKQLLLQEVENHKKQMLS. A helical; Anchor for type IV membrane protein transmembrane segment spans residues 200–220; it reads TDKLLIFLALALFLATVLYIV. At 221–228 the chain is on the lumenal side; sequence KKRLFPFL.

Belongs to the SEC20 family. Component of a SNARE complex consisting of STX18, USE1L, BNIP1/SEC20L and SEC22B. Interacts directly with STX18, RINT1/TIP20L and NAPA. Interacts with ZW10 through RINT1. Interacts with BCL2. Interacts with RNF186. Interacts with RNF185. Interacts with SQSTM1; increased by 'Lys-63'-linked polyubiquitination of BNIP1. As to quaternary structure, (Microbial infection) Interacts with adenovirus E1B 19K protein; plays a role in the suppression of cell apoptosis by the viral protein. Polyubiquitinated. 'Lys-63'-linked polyubiquitination by RNF185 increases the interaction with the autophagy receptor SQSTM1. Undergoes 'Lys-29'- and 'Lys-63'-linked polyubiquitination by RNF186 that may regulate BNIP1 localization to the mitochondrion. Isoform 1 is highly expressed in heart, brain, liver skeletal muscle and pancreas. Isoform 3 is moderately expressed in placenta, lung and kidney. Isoform 4 is highly expressed in testis and small intestine.

Its subcellular location is the endoplasmic reticulum membrane. It is found in the mitochondrion membrane. As part of a SNARE complex may be involved in endoplasmic reticulum membranes fusion and be required for the maintenance of endoplasmic reticulum organization. Also plays a role in apoptosis. It is for instance required for endoplasmic reticulum stress-induced apoptosis. As a substrate of RNF185 interacting with SQSTM1, might also be involved in mitochondrial autophagy. This Homo sapiens (Human) protein is Vesicle transport protein SEC20 (BNIP1).